Reading from the N-terminus, the 185-residue chain is Male-enhanced antigen 1 (185 aa).

Disordered stretches follow at residues 1 to 90 (MGPE…VGDG) and 104 to 134 (GLHLPDPPLESEDEDEEGATALNNHSSIPMD). Acidic residues-rich tracts occupy residues 50–60 (SSEEPEEEQEE) and 112–121 (LESEDEDEEG). The residue at position 114 (S114) is a Phosphoserine.

Highly expressed in testis.

Its function is as follows. May play an important role in spermatogenesis and/or testis development. The protein is Male-enhanced antigen 1 (MEA1) of Homo sapiens (Human).